A 387-amino-acid polypeptide reads, in one-letter code: Phosphoglycerate kinase (387 aa).

Substrate contacts are provided by residues 21-23 (DLN), arginine 36, 60-63 (HLGR), arginine 114, and arginine 147. ATP contacts are provided by residues lysine 198, glutamate 313, and 339–342 (GGDT).

This sequence belongs to the phosphoglycerate kinase family. As to quaternary structure, monomer.

Its subcellular location is the cytoplasm. It catalyses the reaction (2R)-3-phosphoglycerate + ATP = (2R)-3-phospho-glyceroyl phosphate + ADP. It participates in carbohydrate degradation; glycolysis; pyruvate from D-glyceraldehyde 3-phosphate: step 2/5. This chain is Phosphoglycerate kinase, found in Baumannia cicadellinicola subsp. Homalodisca coagulata.